We begin with the raw amino-acid sequence, 368 residues long: Cytochrome b (368 aa).

Helical transmembrane passes span 33–53, 77–99, 112–132, and 178–198; these read FGSL…FLAM, WLIR…THTG, TWMV…LGYV, and FYAL…MHII. Positions 83 and 97 each coordinate heme b. Residues His-182 and His-196 each coordinate heme b. His-201 provides a ligand contact to a ubiquinone. The next 4 membrane-spanning stretches (helical) occupy residues 224 to 244, 288 to 308, 323 to 343, and 345 to 365; these read FSAK…SVVL, LGGV…PMMN, IAFW…SKPV, and SPFE…YMIM.

This sequence belongs to the cytochrome b family. In terms of assembly, the main subunits of complex b-c1 are: cytochrome b, cytochrome c1 and the Rieske protein. The cofactor is heme b.

Its subcellular location is the mitochondrion inner membrane. Functionally, component of the ubiquinol-cytochrome c reductase complex (complex III or cytochrome b-c1 complex) that is part of the mitochondrial respiratory chain. The b-c1 complex mediates electron transfer from ubiquinol to cytochrome c. Contributes to the generation of a proton gradient across the mitochondrial membrane that is then used for ATP synthesis. This is Cytochrome b (mt:Cyt-b) from Bugula neritina (Brown bryozoan).